Reading from the N-terminus, the 229-residue chain is Cytidylate kinase (229 aa).

12–20 (GPSGAGKGT) is a binding site for ATP.

The protein belongs to the cytidylate kinase family. Type 1 subfamily.

The protein localises to the cytoplasm. It catalyses the reaction CMP + ATP = CDP + ADP. It carries out the reaction dCMP + ATP = dCDP + ADP. The polypeptide is Cytidylate kinase (Pseudomonas aeruginosa (strain UCBPP-PA14)).